We begin with the raw amino-acid sequence, 449 residues long: Doublesex- and mab-3-related transcription factor A2 (449 aa).

The segment at residues 57-104 is a DNA-binding region (DM); the sequence is CARCRNHGVVSALKGHKRYCRWKDCMCAKCTLIAERQRVMAAQVALRR. The segment at 166–259 is disordered; it reads KNQLSGSATP…PSPSSAASRH (94 aa). Residues 167 to 177 are compositionally biased toward polar residues; the sequence is NQLSGSATPQP. Positions 230 to 240 are enriched in low complexity; sequence GSVSSIGSDSG. The region spanning 260-295 is the DMA domain; sequence MNAIDILTRVFPSHKRSVLELVLQGCGKDVVQAIEQ.

Belongs to the DMRT family.

The protein resides in the nucleus. Its function is as follows. May be involved in sexual development. In Oreochromis niloticus (Nile tilapia), this protein is Doublesex- and mab-3-related transcription factor A2 (dmrta2).